The sequence spans 277 residues: 4-hydroxy-tetrahydrodipicolinate reductase (277 aa).

NAD(+)-binding positions include 10–15 (GAGGRM) and glutamate 36. Arginine 37 contributes to the NADP(+) binding site. NAD(+) is bound by residues 100–102 (GTT) and 124–127 (SGNM). The active-site Proton donor/acceptor is histidine 158. Position 159 (histidine 159) interacts with (S)-2,3,4,5-tetrahydrodipicolinate. The Proton donor role is filled by lysine 162. 168–169 (GT) lines the (S)-2,3,4,5-tetrahydrodipicolinate pocket.

The protein belongs to the DapB family.

The protein resides in the cytoplasm. It carries out the reaction (S)-2,3,4,5-tetrahydrodipicolinate + NAD(+) + H2O = (2S,4S)-4-hydroxy-2,3,4,5-tetrahydrodipicolinate + NADH + H(+). The enzyme catalyses (S)-2,3,4,5-tetrahydrodipicolinate + NADP(+) + H2O = (2S,4S)-4-hydroxy-2,3,4,5-tetrahydrodipicolinate + NADPH + H(+). It functions in the pathway amino-acid biosynthesis; L-lysine biosynthesis via DAP pathway; (S)-tetrahydrodipicolinate from L-aspartate: step 4/4. Its function is as follows. Catalyzes the conversion of 4-hydroxy-tetrahydrodipicolinate (HTPA) to tetrahydrodipicolinate. This chain is 4-hydroxy-tetrahydrodipicolinate reductase, found in Chelativorans sp. (strain BNC1).